A 252-amino-acid chain; its full sequence is 3-deoxy-manno-octulosonate cytidylyltransferase (252 aa).

This sequence belongs to the KdsB family.

Its subcellular location is the cytoplasm. It carries out the reaction 3-deoxy-alpha-D-manno-oct-2-ulosonate + CTP = CMP-3-deoxy-beta-D-manno-octulosonate + diphosphate. It functions in the pathway nucleotide-sugar biosynthesis; CMP-3-deoxy-D-manno-octulosonate biosynthesis; CMP-3-deoxy-D-manno-octulosonate from 3-deoxy-D-manno-octulosonate and CTP: step 1/1. The protein operates within bacterial outer membrane biogenesis; lipopolysaccharide biosynthesis. Activates KDO (a required 8-carbon sugar) for incorporation into bacterial lipopolysaccharide in Gram-negative bacteria. This Vibrio campbellii (strain ATCC BAA-1116) protein is 3-deoxy-manno-octulosonate cytidylyltransferase.